Here is a 139-residue protein sequence, read N- to C-terminus: Heat shock protein homolog C338.06c (139 aa).

The 113-residue stretch at 27 to 139 (AWLSCWGPAL…EFTTRIVEIQ (113 aa)) folds into the sHSP domain.

Belongs to the small heat shock protein (HSP20) family.

The protein localises to the mitochondrion. The sequence is that of Heat shock protein homolog C338.06c from Schizosaccharomyces pombe (strain 972 / ATCC 24843) (Fission yeast).